The following is a 554-amino-acid chain: Urocanate hydratase (554 aa).

NAD(+) contacts are provided by residues 49-50 (GG), Gln127, 173-175 (GMG), Glu193, Arg198, 239-240 (NA), 260-264 (QTSAH), 270-271 (YI), and Tyr319. The active site involves Cys407. Position 489 (Gly489) interacts with NAD(+).

It belongs to the urocanase family. The cofactor is NAD(+).

It localises to the cytoplasm. The enzyme catalyses 4-imidazolone-5-propanoate = trans-urocanate + H2O. It functions in the pathway amino-acid degradation; L-histidine degradation into L-glutamate; N-formimidoyl-L-glutamate from L-histidine: step 2/3. Its function is as follows. Catalyzes the conversion of urocanate to 4-imidazolone-5-propionate. In Bacillus velezensis (strain DSM 23117 / BGSC 10A6 / LMG 26770 / FZB42) (Bacillus amyloliquefaciens subsp. plantarum), this protein is Urocanate hydratase.